We begin with the raw amino-acid sequence, 91 residues long: Small ribosomal subunit protein bS16 (91 aa).

It belongs to the bacterial ribosomal protein bS16 family.

This Exiguobacterium sp. (strain ATCC BAA-1283 / AT1b) protein is Small ribosomal subunit protein bS16.